Reading from the N-terminus, the 810-residue chain is Plasminogen (810 aa).

An N-terminal signal peptide occupies residues 1–19 (MEHKEVVLLLLLFLKSGQG). In terms of domain architecture, PAN spans 20-98 (EPLDDYVNTQ…RDVVLFEKKV (79 aa)). Intrachain disulfides connect Cys49–Cys73, Cys53–Cys61, Cys103–Cys181, Cys124–Cys164, Cys152–Cys176, Cys185–Cys262, Cys188–Cys316, Cys206–Cys245, Cys234–Cys257, Cys275–Cys352, Cys296–Cys335, and Cys324–Cys347. Kringle domains lie at 103–181 (CKTG…IPEC), 184–262 (ACMH…IPRC), and 275–352 (CLKG…IPSC). The segment at 126-145 (KWSSTSPHRPRFSPATHPSE) is disordered. Residues Arg136, Asp158, and Arg172 each contribute to the L-lysine site. The O-linked (GalNAc...) threonine glycan is linked to Thr365. 9 disulfide bridges follow: Cys377/Cys454, Cys398/Cys437, Cys426/Cys449, Cys481/Cys560, Cys502/Cys543, Cys531/Cys555, Cys567/Cys685, Cys577/Cys585, and Cys607/Cys623. Kringle domains follow at residues 377–454 (CYHG…LKKC) and 481–560 (CMFG…VPQC). Residues Asp432 and Arg445 each coordinate L-lysine. In terms of domain architecture, Peptidase S1 spans 581 to 808 (VVGGCVANAH…FVTWIEGVMR (228 aa)). A Phosphoserine modification is found at Ser597. Active-site charge relay system residues include His622 and Asp665. Ser688 carries the post-translational modification Phosphoserine. Cystine bridges form between Cys699–Cys766, Cys729–Cys745, and Cys756–Cys784. Residue Ser760 is the Charge relay system of the active site.

Belongs to the peptidase S1 family. Plasminogen subfamily. In terms of assembly, interacts with CSPG4 and AMOT. Interacts (via the Kringle domains) with HRG; the interaction tethers PLG to the cell surface and enhances its activation. Interacts (via Kringle 4 domain) with ADA; the interaction stimulates PLG activation when in complex with DPP4. Angiostatin: Interacts with ATP5F1A; the interaction inhibits most of the angiogenic effects of angiostatin. In terms of processing, in the presence of the inhibitor, the activation involves only cleavage after Arg-580, yielding two chains held together by two disulfide bonds. In the absence of the inhibitor, the activation involves additionally the removal of the activation peptide.

It is found in the secreted. It carries out the reaction Preferential cleavage: Lys-|-Xaa &gt; Arg-|-Xaa, higher selectivity than trypsin. Converts fibrin into soluble products.. Converted into plasmin by plasminogen activators, both plasminogen and its activator being bound to fibrin. Activated with catalytic amounts of streptokinase. Its function is as follows. Plasmin dissolves the fibrin of blood clots and acts as a proteolytic factor in a variety of other processes including embryonic development, tissue remodeling, tumor invasion, and inflammation. In ovulation, weakens the walls of the Graafian follicle. It activates the urokinase-type plasminogen activator, collagenases and several complement zymogens, such as C1, C4 and C5. Cleavage of fibronectin and laminin leads to cell detachment and apoptosis. Also cleaves fibrin, thrombospondin and von Willebrand factor. Its role in tissue remodeling and tumor invasion may be modulated by CSPG4. Binds to cells. The sequence is that of Plasminogen (PLG) from Pongo abelii (Sumatran orangutan).